The sequence spans 276 residues: 2-dehydro-3-deoxyphosphooctonate aldolase (276 aa).

This sequence belongs to the KdsA family.

Its subcellular location is the cytoplasm. The enzyme catalyses D-arabinose 5-phosphate + phosphoenolpyruvate + H2O = 3-deoxy-alpha-D-manno-2-octulosonate-8-phosphate + phosphate. It functions in the pathway carbohydrate biosynthesis; 3-deoxy-D-manno-octulosonate biosynthesis; 3-deoxy-D-manno-octulosonate from D-ribulose 5-phosphate: step 2/3. It participates in bacterial outer membrane biogenesis; lipopolysaccharide biosynthesis. In Xanthomonas campestris pv. campestris (strain 8004), this protein is 2-dehydro-3-deoxyphosphooctonate aldolase.